Here is a 170-residue protein sequence, read N- to C-terminus: Adenine phosphoribosyltransferase (170 aa).

This sequence belongs to the purine/pyrimidine phosphoribosyltransferase family. In terms of assembly, homodimer.

It is found in the cytoplasm. It carries out the reaction AMP + diphosphate = 5-phospho-alpha-D-ribose 1-diphosphate + adenine. Its pathway is purine metabolism; AMP biosynthesis via salvage pathway; AMP from adenine: step 1/1. Its function is as follows. Catalyzes a salvage reaction resulting in the formation of AMP, that is energically less costly than de novo synthesis. The sequence is that of Adenine phosphoribosyltransferase from Thermotoga neapolitana (strain ATCC 49049 / DSM 4359 / NBRC 107923 / NS-E).